The following is a 282-amino-acid chain: Bis(5'-nucleosyl)-tetraphosphatase, symmetrical (282 aa).

This sequence belongs to the Ap4A hydrolase family.

It catalyses the reaction P(1),P(4)-bis(5'-adenosyl) tetraphosphate + H2O = 2 ADP + 2 H(+). Its function is as follows. Hydrolyzes diadenosine 5',5'''-P1,P4-tetraphosphate to yield ADP. In Klebsiella pneumoniae (strain 342), this protein is Bis(5'-nucleosyl)-tetraphosphatase, symmetrical.